The following is a 198-amino-acid chain: ATP-dependent Clp protease proteolytic subunit (198 aa).

Ser-101 serves as the catalytic Nucleophile. Residue His-126 is part of the active site.

The protein belongs to the peptidase S14 family. As to quaternary structure, component of the chloroplastic Clp protease core complex.

It localises to the plastid. Its subcellular location is the chloroplast stroma. It catalyses the reaction Hydrolysis of proteins to small peptides in the presence of ATP and magnesium. alpha-casein is the usual test substrate. In the absence of ATP, only oligopeptides shorter than five residues are hydrolyzed (such as succinyl-Leu-Tyr-|-NHMec, and Leu-Tyr-Leu-|-Tyr-Trp, in which cleavage of the -Tyr-|-Leu- and -Tyr-|-Trp bonds also occurs).. In terms of biological role, cleaves peptides in various proteins in a process that requires ATP hydrolysis. Has a chymotrypsin-like activity. Plays a major role in the degradation of misfolded proteins. This chain is ATP-dependent Clp protease proteolytic subunit, found in Solanum bulbocastanum (Wild potato).